The following is a 1104-amino-acid chain: Mitogen-activated protein kinase kinase kinase 9 (1104 aa).

Positions 12–22 (ASAAAAAPPGE) are enriched in low complexity. The tract at residues 12-47 (ASAAAAAPPGEDGAGAGAEEEEEEEEEAAAAVGPGE) is disordered. Residues 29 to 39 (AEEEEEEEEEA) are compositionally biased toward acidic residues. The SH3 domain occupies 52 to 116 (APLPYWTAVF…PSNYVTPRSA (65 aa)). A Protein kinase domain is found at 144–412 (LTLEEIIGIG…LTTIEESGFF (269 aa)). Residues 150–158 (IGIGGFGKV) and Lys-171 contribute to the ATP site. Asp-268 serves as the catalytic Proton acceptor. A phosphothreonine; by autocatalysis mark is found at Thr-304 and Thr-305. At Ser-308 the chain carries Phosphoserine; by autocatalysis. Thr-312 carries the phosphothreonine; by autocatalysis modification. 2 leucine-zipper regions span residues 430–451 (IQEM…EEEL) and 465–486 (LRRR…ELNI). Disordered stretches follow at residues 532-636 (ASPT…PHFH), 675-742 (MEDE…LKRG), 781-819 (EEPE…FKKE), and 890-1038 (RDPN…CFAS). Ser-533 carries the phosphoserine modification. Polar residues-rich tracts occupy residues 566–575 (PGESSKTWGR) and 723–739 (PVNS…TNSL). The segment covering 785–797 (PPAREEKKRREGL) has biased composition (basic and acidic residues). Polar residues predominate over residues 893–910 (NQSLTPTHVTLTTPSQPS). Positions 929–944 (SRSPSSNGLSPSPGAG) are enriched in low complexity. Over residues 1014–1038 (HARSTSPANSSSTETPSNLDSCFAS) the composition is skewed to polar residues.

It belongs to the protein kinase superfamily. STE Ser/Thr protein kinase family. MAP kinase kinase kinase subfamily. In terms of assembly, homodimer. The cofactor is Mg(2+). Autophosphorylation on serine and threonine residues within the activation loop plays a role in enzyme activation. Thr-312 is likely to be the main autophosphorylation site. Autophosphorylation also occurs on Thr-304 and Ser-308. Expressed in epithelial tumor cell lines of colonic, breast and esophageal origin.

The enzyme catalyses L-seryl-[protein] + ATP = O-phospho-L-seryl-[protein] + ADP + H(+). It carries out the reaction L-threonyl-[protein] + ATP = O-phospho-L-threonyl-[protein] + ADP + H(+). Its activity is regulated as follows. Homodimerization via the leucine zipper domains is required for autophosphorylation of multiple sites in the activation loop and subsequent activation. Autophosphorylation at Thr-312 is the key step in activation of MAP3K9/MLK1 and is required for full phosphorylation. Autophosphorylation at Thr-304 and Ser-308 have been shown to be of secondary importance in the activation of MAP3K9/MLK1. CEP-1347 and many indolocarbazole analogs have been shown to act as inhibitors of MAP3K9/MLK1 activity. Serine/threonine kinase which acts as an essential component of the MAP kinase signal transduction pathway. Plays an important role in the cascades of cellular responses evoked by changes in the environment. Once activated, acts as an upstream activator of the MKK/JNK signal transduction cascade through the phosphorylation of MAP2K4/MKK4 and MAP2K7/MKK7 which in turn activate the JNKs. The MKK/JNK signaling pathway regulates stress response via activator protein-1 (JUN) and GATA4 transcription factors. Also plays a role in mitochondrial death signaling pathway, including the release cytochrome c, leading to apoptosis. This chain is Mitogen-activated protein kinase kinase kinase 9 (MAP3K9), found in Homo sapiens (Human).